The primary structure comprises 171 residues: Antimicrobial protein CAP18 (171 aa).

The first 29 residues, methionine 1–alanine 29, serve as a signal peptide directing secretion. 2 disulfide bridges follow: cysteine 85/cysteine 96 and cysteine 107/cysteine 124.

The protein belongs to the cathelicidin family. In terms of tissue distribution, neutrophils.

It is found in the secreted. CAP18 binds to the lipid A moiety of bacterial lipopolysaccharides (LPS), a glycolipid present in the outer membrane of all Gram-negative bacteria. Has antibiotic activity. This is Antimicrobial protein CAP18 (CAP18) from Oryctolagus cuniculus (Rabbit).